A 677-amino-acid polypeptide reads, in one-letter code: UvrABC system protein B (677 aa).

One can recognise a Helicase ATP-binding domain in the interval 26 to 414; that stretch reads DNLDAGLAHQ…SGNEVVEQVV (389 aa). 39–46 serves as a coordination point for ATP; it reads GVTGSGKT. A Beta-hairpin motif is present at residues 92–115; the sequence is YYDYYQPEAYVPTTDTFIEKDASI. The Helicase C-terminal domain maps to 432-598; it reads QVDDLMSEIR…GLNKDITDVM (167 aa). The 36-residue stretch at 637 to 672 folds into the UVR domain; it reads MKEIDAKEKEMYKAAQNLEFEQAGKLRDEVAELREQ.

The protein belongs to the UvrB family. Forms a heterotetramer with UvrA during the search for lesions. Interacts with UvrC in an incision complex.

It localises to the cytoplasm. Functionally, the UvrABC repair system catalyzes the recognition and processing of DNA lesions. A damage recognition complex composed of 2 UvrA and 2 UvrB subunits scans DNA for abnormalities. Upon binding of the UvrA(2)B(2) complex to a putative damaged site, the DNA wraps around one UvrB monomer. DNA wrap is dependent on ATP binding by UvrB and probably causes local melting of the DNA helix, facilitating insertion of UvrB beta-hairpin between the DNA strands. Then UvrB probes one DNA strand for the presence of a lesion. If a lesion is found the UvrA subunits dissociate and the UvrB-DNA preincision complex is formed. This complex is subsequently bound by UvrC and the second UvrB is released. If no lesion is found, the DNA wraps around the other UvrB subunit that will check the other stand for damage. The sequence is that of UvrABC system protein B from Idiomarina loihiensis (strain ATCC BAA-735 / DSM 15497 / L2-TR).